The following is a 187-amino-acid chain: Cell division protein SepF (187 aa).

The disordered stretch occupies residues Gly13–Thr74. The span at Glu16–Pro65 shows a compositional bias: basic and acidic residues.

This sequence belongs to the SepF family. Homodimer. Interacts with FtsZ.

The protein resides in the cytoplasm. Cell division protein that is part of the divisome complex and is recruited early to the Z-ring. Probably stimulates Z-ring formation, perhaps through the cross-linking of FtsZ protofilaments. Its function overlaps with FtsA. The protein is Cell division protein SepF of Kineococcus radiotolerans (strain ATCC BAA-149 / DSM 14245 / SRS30216).